The following is a 226-amino-acid chain: Large ribosomal subunit protein uL4 (226 aa).

A disordered region spans residues 47–74 (GTAKAKTRSEVSGGGRKPWPQKHTGRAR).

It belongs to the universal ribosomal protein uL4 family. As to quaternary structure, part of the 50S ribosomal subunit.

Its function is as follows. One of the primary rRNA binding proteins, this protein initially binds near the 5'-end of the 23S rRNA. It is important during the early stages of 50S assembly. It makes multiple contacts with different domains of the 23S rRNA in the assembled 50S subunit and ribosome. Functionally, forms part of the polypeptide exit tunnel. This chain is Large ribosomal subunit protein uL4, found in Kosmotoga olearia (strain ATCC BAA-1733 / DSM 21960 / TBF 19.5.1).